The following is a 552-amino-acid chain: Chaperonin GroEL (552 aa).

Residues 30-33, Lys-51, 87-91, Gly-415, 480-482, and Asp-496 each bind ATP; these read TLGP, DGTTT, and NAA.

The protein belongs to the chaperonin (HSP60) family. In terms of assembly, forms a cylinder of 14 subunits composed of two heptameric rings stacked back-to-back. Interacts with the co-chaperonin GroES.

It is found in the cytoplasm. The enzyme catalyses ATP + H2O + a folded polypeptide = ADP + phosphate + an unfolded polypeptide.. In terms of biological role, together with its co-chaperonin GroES, plays an essential role in assisting protein folding. The GroEL-GroES system forms a nano-cage that allows encapsulation of the non-native substrate proteins and provides a physical environment optimized to promote and accelerate protein folding. This chain is Chaperonin GroEL, found in Verminephrobacter eiseniae (strain EF01-2).